Reading from the N-terminus, the 197-residue chain is NADH-quinone oxidoreductase subunit C (197 aa).

This sequence belongs to the complex I 30 kDa subunit family. In terms of assembly, NDH-1 is composed of 14 different subunits. Subunits NuoB, C, D, E, F, and G constitute the peripheral sector of the complex.

The protein localises to the cell inner membrane. It catalyses the reaction a quinone + NADH + 5 H(+)(in) = a quinol + NAD(+) + 4 H(+)(out). Functionally, NDH-1 shuttles electrons from NADH, via FMN and iron-sulfur (Fe-S) centers, to quinones in the respiratory chain. The immediate electron acceptor for the enzyme in this species is believed to be ubiquinone. Couples the redox reaction to proton translocation (for every two electrons transferred, four hydrogen ions are translocated across the cytoplasmic membrane), and thus conserves the redox energy in a proton gradient. This is NADH-quinone oxidoreductase subunit C from Neisseria meningitidis serogroup B (strain ATCC BAA-335 / MC58).